Here is a 354-residue protein sequence, read N- to C-terminus: UPF0496 protein At4g34330 (354 aa).

Transmembrane regions (helical) follow at residues 200-220 (IIFM…ATMA) and 222-242 (PHVA…GKWI). Residues 270 to 341 (AVQDLNNIKD…CSTDIRRART (72 aa)) are a coiled coil.

Belongs to the UPF0496 family.

The protein resides in the membrane. This is UPF0496 protein At4g34330 from Arabidopsis thaliana (Mouse-ear cress).